The following is a 404-amino-acid chain: MDDLMTNIEHYHVSLTTGFLPPSAPLTHLPQKYYEPWETLASSLPTRIRDGSLRHQASLIPLLETDFLVTDAEWQRAYVVLGFLSNAFIFCQYPPSERLPLSLAEPMMNVSCYLGLPCVPTYSGQTLWNHCYISEIQLPVLEQVNTLVSFTGSREESAFFGISVAIEKCGSPLIRTLLHAMAAAEAGNEKELTACLSKAMITIDSITSILPQLYGRCSPSFFYNTLRPFLEGTQDLKSAGLPNGVFFETKNGGSYQKFRGPSNAQSSLFCFIDIALGIEHNDNSFLTEMRQYMPGPHRDFLARVEAIDSVRHFISANPDASQLQEAYEGCVLALARFRQIHIRLVARYIVIPSNGTKTADQSSMGNGLSSEPVSIAGAQGTGGTKPVEFLKVIRNDVLESLQAS.

Residue H341 participates in heme b binding.

This sequence belongs to the indoleamine 2,3-dioxygenase family. It depends on heme as a cofactor.

The protein operates within secondary metabolite biosynthesis. Its function is as follows. 6-hydroxytryptophan 2,3-dioxygenase; part of the fragmented gene cluster that mediates the biosynthesis of fusarochromene, a tryptophan-derived metabolite closely related to a group of mycotoxins including fusarochromanone. Within the pathway, fscD is responsible of the cleavage of the pyrrole ring of 6-hydroxytryptophan. The first step of the pathway is the epimerization of L-tryptophan to D-tryptophan in the presence of the NRPS-like tryptophan epimerase fscC. D-tryptophan is subsequently hydroxylated by the tryptophan 6-hydroxylase fscE to yield 6-hydroxytryptophan. The pyrrole ring undergoes cleavaged by the tryptophan 2,3-dioxygenase fscD and is finally converted to 4-hydroxykyrunenine by the hydrolase fscH. The NRPS-like oxidoreductase fscA reduces the carboxyl group to primary alcohol and the DMATS-type prenyltransferase fscG performs prenylation, followed by the formation of a chromene ring catalyzed by the oxidoreductase fscI, which leads to desacetylfusarochromene. Epoxidation by fscF and rearrangement reactions of chromene double bonds convert compound desacetylfusarochromene to fusarochromanones. Although specific acetyltransferases were not found near the fsc gene cluster, several predicted enzymes containing the N-acetyltransferase superfamily domain are present in the genome of F.equiseti. These predicted enzymes may have the potential to convert desacetylfusarochromene to fusarochromene. The polypeptide is 6-hydroxytryptophan 2,3-dioxygenase fscD (Fusarium equiseti (Fusarium scirpi)).